The chain runs to 122 residues: Lycotoxin-Pa4a (122 aa).

The signal sequence occupies residues 1–20; the sequence is MKLGIFFSVFFLAMIHSCLS. Residues 21 to 47 constitute a propeptide that is removed on maturation; it reads ETNEDKNLESYFREDDLKALSFGEYAR. 4 cysteine pairs are disulfide-bonded: Cys58–Cys73, Cys65–Cys82, Cys72–Cys100, and Cys84–Cys98.

The protein belongs to the neurotoxin 19 (CSTX) family. Expressed by the venom gland.

The protein localises to the secreted. Its subcellular location is the target cell membrane. Functionally, potent antibacterial peptide with anti-inflammatory properties. Inhibits both Gram-negative and Gram-positive bacteria by disrupting both the outer membrane and the cytosolic membrane of bacteria. Also downregulates the expression of pro-inflammatory mediators (cyclooxygenase-2 (PTGS2/COX2), nitric oxide-induced synthase (NOS2), IL-1 beta (IL1B), TNF-alpha (TNF)) and upregulates the level of anti-inflammatory cytokine (IL10) by inactivating mitogen-activated protein kinase signaling in a lipopolysaccharide-stimulated murine macrophage cell line. The chain is Lycotoxin-Pa4a from Pardosa astrigera (Wolf spider).